Reading from the N-terminus, the 451-residue chain is TERF1-interacting nuclear factor 2 (451 aa).

Ala-2 bears the N-acetylalanine mark. Residues 229-257 are disordered; sequence NPLPKAKPGTHLPQGPSSRTHPEPLAGRH. Positions 256-278 match the TBM motif; that stretch reads RHFNLAPLGRRRVQSQWASTRGG. The short motif at 262-268 is the Nuclear localization signal element; sequence PLGRRRV. Ser-295 is modified (phosphoserine). Residues Lys-302, Lys-306, Lys-341, and Lys-353 each participate in a glycyl lysine isopeptide (Lys-Gly) (interchain with G-Cter in SUMO2) cross-link.

In terms of assembly, monomer. Found in a complex with POT1; TERF1 and TNKS1. Component of the shelterin complex (telosome) composed of TERF1, TERF2, TINF2, TERF2IP ACD and POT1. Interacts with TERF1, TERF2 and ACD. In terms of tissue distribution, detected in heart, brain, placenta, lung, liver, skeletal muscle, kidney and pancreas.

The protein localises to the nucleus. It is found in the chromosome. It localises to the telomere. The protein resides in the nucleus matrix. In terms of biological role, component of the shelterin complex (telosome) that is involved in the regulation of telomere length and protection. Shelterin associates with arrays of double-stranded TTAGGG repeats added by telomerase and protects chromosome ends; without its protective activity, telomeres are no longer hidden from the DNA damage surveillance and chromosome ends are inappropriately processed by DNA repair pathways. Plays a role in shelterin complex assembly. Isoform 1 may have additional role in tethering telomeres to the nuclear matrix. The polypeptide is TERF1-interacting nuclear factor 2 (TINF2) (Homo sapiens (Human)).